Reading from the N-terminus, the 660-residue chain is ATP-dependent zinc metalloprotease FtsH (660 aa).

The tract at residues 1 to 20 is disordered; that stretch reads MMPSSQRPSPRGSRQSPSPD. The Cytoplasmic portion of the chain corresponds to 1–24; the sequence is MMPSSQRPSPRGSRQSPSPDQRGR. A helical membrane pass occupies residues 25 to 45; that stretch reads IAFAILATLVVAVLLLTLFSH. Topologically, residues 46 to 118 are extracellular; the sequence is APSGQPLGYS…VQVSYITPGP (73 aa). The chain crosses the membrane as a helical span at residues 119 to 139; it reads GIASTIIEYVIFFGIFIGIWV. The Cytoplasmic portion of the chain corresponds to 140–660; the sequence is YLTRRTQGSV…ASHDDTDPVS (521 aa). Residue 213–220 coordinates ATP; sequence GPPGTGKT. His435 contributes to the Zn(2+) binding site. Glu436 is a catalytic residue. The Zn(2+) site is built by His439 and Asp511.

This sequence in the central section; belongs to the AAA ATPase family. The protein in the C-terminal section; belongs to the peptidase M41 family. As to quaternary structure, homohexamer. Zn(2+) serves as cofactor.

It is found in the cell membrane. Acts as a processive, ATP-dependent zinc metallopeptidase for both cytoplasmic and membrane proteins. Plays a role in the quality control of integral membrane proteins. This chain is ATP-dependent zinc metalloprotease FtsH, found in Acidimicrobium ferrooxidans (strain DSM 10331 / JCM 15462 / NBRC 103882 / ICP).